The following is a 206-amino-acid chain: Sec-independent protein translocase protein TatB (206 aa).

A helical transmembrane segment spans residues 1–21 (MFDIGWTELLVIAVVLIVVVG). A disordered region spans residues 104–206 (ENKTEVPSAA…VQTKKKKDEA (103 aa)). A compositionally biased stretch (low complexity) spans 110–124 (PSAAMSAPTPSMSLP). Over residues 125-138 (ETPPVVPTPAPAPE) the composition is skewed to pro residues. Low complexity-rich tracts occupy residues 139 to 151 (PAAV…AAKP) and 187 to 196 (ARKPAAPKTP).

It belongs to the TatB family. As to quaternary structure, the Tat system comprises two distinct complexes: a TatABC complex, containing multiple copies of TatA, TatB and TatC subunits, and a separate TatA complex, containing only TatA subunits. Substrates initially bind to the TatABC complex, which probably triggers association of the separate TatA complex to form the active translocon.

The protein localises to the cell inner membrane. Its function is as follows. Part of the twin-arginine translocation (Tat) system that transports large folded proteins containing a characteristic twin-arginine motif in their signal peptide across membranes. Together with TatC, TatB is part of a receptor directly interacting with Tat signal peptides. TatB may form an oligomeric binding site that transiently accommodates folded Tat precursor proteins before their translocation. This Rhizobium etli (strain ATCC 51251 / DSM 11541 / JCM 21823 / NBRC 15573 / CFN 42) protein is Sec-independent protein translocase protein TatB.